The sequence spans 178 residues: ATP synthase subunit delta (178 aa).

This sequence belongs to the ATPase delta chain family. In terms of assembly, F-type ATPases have 2 components, F(1) - the catalytic core - and F(0) - the membrane proton channel. F(1) has five subunits: alpha(3), beta(3), gamma(1), delta(1), epsilon(1). F(0) has three main subunits: a(1), b(2) and c(10-14). The alpha and beta chains form an alternating ring which encloses part of the gamma chain. F(1) is attached to F(0) by a central stalk formed by the gamma and epsilon chains, while a peripheral stalk is formed by the delta and b chains.

It localises to the cell inner membrane. In terms of biological role, f(1)F(0) ATP synthase produces ATP from ADP in the presence of a proton or sodium gradient. F-type ATPases consist of two structural domains, F(1) containing the extramembraneous catalytic core and F(0) containing the membrane proton channel, linked together by a central stalk and a peripheral stalk. During catalysis, ATP synthesis in the catalytic domain of F(1) is coupled via a rotary mechanism of the central stalk subunits to proton translocation. Functionally, this protein is part of the stalk that links CF(0) to CF(1). It either transmits conformational changes from CF(0) to CF(1) or is implicated in proton conduction. The protein is ATP synthase subunit delta of Pseudomonas aeruginosa (strain UCBPP-PA14).